A 150-amino-acid chain; its full sequence is SsrA-binding protein (150 aa).

The protein belongs to the SmpB family.

It is found in the cytoplasm. Its function is as follows. Required for rescue of stalled ribosomes mediated by trans-translation. Binds to transfer-messenger RNA (tmRNA), required for stable association of tmRNA with ribosomes. tmRNA and SmpB together mimic tRNA shape, replacing the anticodon stem-loop with SmpB. tmRNA is encoded by the ssrA gene; the 2 termini fold to resemble tRNA(Ala) and it encodes a 'tag peptide', a short internal open reading frame. During trans-translation Ala-aminoacylated tmRNA acts like a tRNA, entering the A-site of stalled ribosomes, displacing the stalled mRNA. The ribosome then switches to translate the ORF on the tmRNA; the nascent peptide is terminated with the 'tag peptide' encoded by the tmRNA and targeted for degradation. The ribosome is freed to recommence translation, which seems to be the essential function of trans-translation. The sequence is that of SsrA-binding protein from Campylobacter curvus (strain 525.92).